The sequence spans 498 residues: ATP synthase subunit beta, chloroplastic (498 aa).

Thr6 is modified (phosphothreonine). Ser13 carries the phosphoserine modification. An ATP-binding site is contributed by 172–179 (GGAGVGKT).

Belongs to the ATPase alpha/beta chains family. In terms of assembly, F-type ATPases have 2 components, CF(1) - the catalytic core - and CF(0) - the membrane proton channel. CF(1) has five subunits: alpha(3), beta(3), gamma(1), delta(1), epsilon(1). CF(0) has four main subunits: a(1), b(1), b'(1) and c(9-12).

Its subcellular location is the plastid. It localises to the chloroplast thylakoid membrane. It carries out the reaction ATP + H2O + 4 H(+)(in) = ADP + phosphate + 5 H(+)(out). Produces ATP from ADP in the presence of a proton gradient across the membrane. The catalytic sites are hosted primarily by the beta subunits. The polypeptide is ATP synthase subunit beta, chloroplastic (Olimarabidopsis pumila (Dwarf rocket)).